A 231-amino-acid chain; its full sequence is tRNA (guanine-N(1)-)-methyltransferase (231 aa).

Residues Gly111 and 131–136 each bind S-adenosyl-L-methionine; that span reads LGNYVL.

It belongs to the RNA methyltransferase TrmD family. Homodimer.

It localises to the cytoplasm. The enzyme catalyses guanosine(37) in tRNA + S-adenosyl-L-methionine = N(1)-methylguanosine(37) in tRNA + S-adenosyl-L-homocysteine + H(+). Functionally, specifically methylates guanosine-37 in various tRNAs. In Leptospira interrogans serogroup Icterohaemorrhagiae serovar copenhageni (strain Fiocruz L1-130), this protein is tRNA (guanine-N(1)-)-methyltransferase.